A 291-amino-acid polypeptide reads, in one-letter code: Protein SpdB (291 aa).

Transmembrane regions (helical) follow at residues 24 to 44 (VVVI…LVVG), 71 to 91 (ITGV…AHAL), and 99 to 119 (WLAV…HGLW).

The protein localises to the cell membrane. Involved in plasmid transfer. The chain is Protein SpdB (spdB) from Streptomyces lividans.